We begin with the raw amino-acid sequence, 1044 residues long: Phosphatidylinositol 4,5-bisphosphate 3-kinase catalytic subunit delta isoform (1044 aa).

One can recognise a PI3K-ABD domain in the interval 16 to 105 (ENQSVVVDFL…LPVLRLVARE (90 aa)). In terms of domain architecture, PI3K-RBD spans 187-278 (NRALLVNVKF…GLTPHLTMVH (92 aa)). The tract at residues 287–312 (DEQSNPAPQVQKPRAKPPPIPAKKPS) is disordered. Positions 319 to 476 (LEQPFRIELI…SAAALLICLP (158 aa)) constitute a C2 PI3K-type domain. Residues 497-674 (HSECVHVTEE…GLILEAYCRG (178 aa)) form the PIK helical domain. At Y524 the chain carries Phosphotyrosine. One can recognise a PI3K/PI4K catalytic domain in the interval 745–1027 (CVEQCTFMDS…KFNEALRESW (283 aa)). Positions 751-757 (FMDSKMK) are G-loop. Residues 890 to 898 (GIGDRHSDN) form a catalytic loop region. The activation loop stretch occupies residues 909 to 935 (HIDFGHFLGNFKTKFGINRERVPFILT). Residue S1039 is modified to Phosphoserine; by autocatalysis.

This sequence belongs to the PI3/PI4-kinase family. In terms of assembly, heterodimer of a catalytic subunit PIK3CD and a p85 regulatory subunit (PIK3R1, PIK3R2 or PIK3R3). Interacts with ERAS. Interacts with HRAS. Post-translationally, autophosphorylation on Ser-1039 results in the almost complete inactivation of the lipid kinase activity. In humans, the highest levels of expression are seen in peripheral blood mononuclear cells, spleen, and thymus, and low levels of expression in testes, uterus, colon, and small intestine but not in other tissues examined including prostate, heart, brain, and liver. Isoform 2 is expressed in normal thymus, lung and spleen tissues, and is detected at low levels in normal lysates from colon and ovarian biopsies, at elevated levels in lysates from colorectal tumors and is abundantly expressed in some ovarian tumors (at protein level). Both isoform 1 and isoform 2 are widely expressed. Isoform 1 is expressed predominantly in leukocytes.

It is found in the cytoplasm. The enzyme catalyses a 1,2-diacyl-sn-glycero-3-phospho-(1D-myo-inositol-4,5-bisphosphate) + ATP = a 1,2-diacyl-sn-glycero-3-phospho-(1D-myo-inositol-3,4,5-trisphosphate) + ADP + H(+). It carries out the reaction a 1,2-diacyl-sn-glycero-3-phospho-(1D-myo-inositol) + ATP = a 1,2-diacyl-sn-glycero-3-phospho-(1D-myo-inositol-3-phosphate) + ADP + H(+). The catalysed reaction is 1-octadecanoyl-2-(5Z,8Z,11Z,14Z)-eicosatetraenoyl-sn-glycero-3-phospho-1D-myo-inositol 4,5-bisphosphate + ATP = 1-octadecanoyl-2-(5Z,8Z,11Z,14Z-eicosatetraenoyl)-sn-glycero-3-phospho-(1D-myo-inositol 3,4,5-triphosphate) + ADP + H(+). It participates in phospholipid metabolism; phosphatidylinositol phosphate biosynthesis. With respect to regulation, activated by growth factors and cytokine receptors through a tyrosine-kinase-dependent mechanism. Activated by RAS. IC87114 inhibits lipid kinase activity and is selective in cells at doses up to 5-10 uM. IC87114 blocks T-cell receptor signaling in naive and memory T-cells and reduces cytokine production by memory T-cells. Its function is as follows. Phosphoinositide-3-kinase (PI3K) phosphorylates phosphatidylinositol (PI) and its phosphorylated derivatives at position 3 of the inositol ring to produce 3-phosphoinositides. Uses ATP and PtdIns(4,5)P2 (phosphatidylinositol 4,5-bisphosphate) to generate phosphatidylinositol 3,4,5-trisphosphate (PIP3). PIP3 plays a key role by recruiting PH domain-containing proteins to the membrane, including AKT1 and PDPK1, activating signaling cascades involved in cell growth, survival, proliferation, motility and morphology. Mediates immune responses. Plays a role in B-cell development, proliferation, migration, and function. Required for B-cell receptor (BCR) signaling. Mediates B-cell proliferation response to anti-IgM, anti-CD40 and IL4 stimulation. Promotes cytokine production in response to TLR4 and TLR9. Required for antibody class switch mediated by TLR9. Involved in the antigen presentation function of B-cells. Involved in B-cell chemotaxis in response to CXCL13 and sphingosine 1-phosphate (S1P). Required for proliferation, signaling and cytokine production of naive, effector and memory T-cells. Required for T-cell receptor (TCR) signaling. Mediates TCR signaling events at the immune synapse. Activation by TCR leads to antigen-dependent memory T-cell migration and retention to antigenic tissues. Together with PIK3CG participates in T-cell development. Contributes to T-helper cell expansion and differentiation. Required for T-cell migration mediated by homing receptors SELL/CD62L, CCR7 and S1PR1 and antigen dependent recruitment of T-cells. Together with PIK3CG is involved in natural killer (NK) cell development and migration towards the sites of inflammation. Participates in NK cell receptor activation. Plays a role in NK cell maturation and cytokine production. Together with PIK3CG is involved in neutrophil chemotaxis and extravasation. Together with PIK3CG participates in neutrophil respiratory burst. Plays important roles in mast-cell development and mast cell mediated allergic response. Involved in stem cell factor (SCF)-mediated proliferation, adhesion and migration. Required for allergen-IgE-induced degranulation and cytokine release. The lipid kinase activity is required for its biological function. Isoform 2 may be involved in stabilizing total RAS levels, resulting in increased ERK phosphorylation and increased PI3K activity. The protein is Phosphatidylinositol 4,5-bisphosphate 3-kinase catalytic subunit delta isoform (PIK3CD) of Homo sapiens (Human).